We begin with the raw amino-acid sequence, 60 residues long: Single-pass membrane and coiled-coil domain-containing protein 4 homolog (60 aa).

A disordered region spans residues 1-22 (MRKLRGGQTRETRKQKQERREE). Residues 8–22 (QTRETRKQKQERREE) show a composition bias toward basic and acidic residues. A coiled-coil region spans residues 8–34 (QTRETRKQKQERREENQKIQQQLKTIV). Residues 30 to 50 (LKTIVLPICGVVFLCIVAYVF) traverse the membrane as a helical segment.

The protein belongs to the SMCO4 family.

It localises to the membrane. The sequence is that of Single-pass membrane and coiled-coil domain-containing protein 4 homolog from Culex quinquefasciatus (Southern house mosquito).